Reading from the N-terminus, the 677-residue chain is DNA ligase (677 aa).

Residues 35–39, 85–86, and E110 contribute to the NAD(+) site; these read DAEFD and SL. K112 functions as the N6-AMP-lysine intermediate in the catalytic mechanism. R133 and E173 together coordinate NAD(+). Residues 189–210 are disordered; that stretch reads QKEGGKPFANPRNAAAGSLRQK. Residues K289 and K313 each contribute to the NAD(+) site. C407, C410, C426, and C432 together coordinate Zn(2+). The 82-residue stretch at 596-677 folds into the BRCT domain; the sequence is IPDQVLEGLT…FKQLLANGTV (82 aa).

It belongs to the NAD-dependent DNA ligase family. LigA subfamily. It depends on Mg(2+) as a cofactor. The cofactor is Mn(2+).

The enzyme catalyses NAD(+) + (deoxyribonucleotide)n-3'-hydroxyl + 5'-phospho-(deoxyribonucleotide)m = (deoxyribonucleotide)n+m + AMP + beta-nicotinamide D-nucleotide.. DNA ligase that catalyzes the formation of phosphodiester linkages between 5'-phosphoryl and 3'-hydroxyl groups in double-stranded DNA using NAD as a coenzyme and as the energy source for the reaction. It is essential for DNA replication and repair of damaged DNA. The protein is DNA ligase of Corynebacterium diphtheriae (strain ATCC 700971 / NCTC 13129 / Biotype gravis).